The following is an 83-amino-acid chain: Small ribosomal subunit protein bS16 (83 aa).

The protein belongs to the bacterial ribosomal protein bS16 family.

This is Small ribosomal subunit protein bS16 from Shewanella amazonensis (strain ATCC BAA-1098 / SB2B).